A 575-amino-acid chain; its full sequence is Sorting nexin-41 (575 aa).

The interval 30–66 (TDGPDDYDFTEPSINGSSDENAQSNAVAEPIEETDEP) is disordered. Residues 41 to 55 (PSINGSSDENAQSNA) are compositionally biased toward polar residues. The PX domain occupies 101–221 (QGKNPEVIRI…QKFLNPEYFW (121 aa)). Positions 139, 141, 165, and 188 each coordinate a 1,2-diacyl-sn-glycero-3-phospho-(1D-myo-inositol-3-phosphate). Positions 467–486 (FRSSASPNNKSGSDSISSEV) are disordered. A compositionally biased stretch (polar residues) spans 469–484 (SSASPNNKSGSDSISS).

It belongs to the sorting nexin family.

It is found in the endosome membrane. The protein resides in the endomembrane system. Its function is as follows. May be required for cytoplasm to vacuole transport (Cvt) and pexophagy. This Kluyveromyces lactis (strain ATCC 8585 / CBS 2359 / DSM 70799 / NBRC 1267 / NRRL Y-1140 / WM37) (Yeast) protein is Sorting nexin-41 (SNX41).